The sequence spans 506 residues: Probable lipid II flippase MurJ (506 aa).

13 consecutive transmembrane segments (helical) span residues Y4 to V24, T86 to A106, V127 to V147, I153 to F173, I181 to A201, I232 to L252, A263 to F283, I308 to L328, T345 to F365, T377 to I397, L405 to L425, I436 to F456, and L474 to I494.

Belongs to the MurJ/MviN family.

It is found in the cell inner membrane. The protein operates within cell wall biogenesis; peptidoglycan biosynthesis. Involved in peptidoglycan biosynthesis. Transports lipid-linked peptidoglycan precursors from the inner to the outer leaflet of the cytoplasmic membrane. In Borreliella burgdorferi (strain ATCC 35210 / DSM 4680 / CIP 102532 / B31) (Borrelia burgdorferi), this protein is Probable lipid II flippase MurJ.